The sequence spans 325 residues: 1-aminocyclopropane-1-carboxylate oxidase 2 (325 aa).

Residues proline 157–proline 257 enclose the Fe2OG dioxygenase domain. Residues histidine 181, aspartate 183, and histidine 238 each contribute to the Fe cation site.

It belongs to the iron/ascorbate-dependent oxidoreductase family. The cofactor is Fe cation.

It carries out the reaction 1-aminocyclopropane-1-carboxylate + L-ascorbate + O2 = ethene + L-dehydroascorbate + hydrogen cyanide + CO2 + 2 H2O. It functions in the pathway alkene biosynthesis; ethylene biosynthesis via S-adenosyl-L-methionine; ethylene from S-adenosyl-L-methionine: step 2/2. This Doritaenopsis sp. (Moth orchid) protein is 1-aminocyclopropane-1-carboxylate oxidase 2 (ACO2).